An 86-amino-acid polypeptide reads, in one-letter code: Large ribosomal subunit protein uL23 (86 aa).

Belongs to the universal ribosomal protein uL23 family. Part of the 50S ribosomal subunit. Contacts protein L29.

Functionally, binds to 23S rRNA. One of the proteins that surrounds the polypeptide exit tunnel on the outside of the ribosome. This is Large ribosomal subunit protein uL23 from Methanosphaera stadtmanae (strain ATCC 43021 / DSM 3091 / JCM 11832 / MCB-3).